A 75-amino-acid chain; its full sequence is Large ribosomal subunit protein bL31 (75 aa).

Zn(2+)-binding residues include Cys16, Cys18, Cys38, and Cys41.

It belongs to the bacterial ribosomal protein bL31 family. Type A subfamily. In terms of assembly, part of the 50S ribosomal subunit. The cofactor is Zn(2+).

Functionally, binds the 23S rRNA. The sequence is that of Large ribosomal subunit protein bL31 from Mycolicibacterium smegmatis (strain ATCC 700084 / mc(2)155) (Mycobacterium smegmatis).